Here is a 185-residue protein sequence, read N- to C-terminus: Putative manganese efflux pump MntP (185 aa).

6 helical membrane passes run 4–24 (LFIG…TDAF), 40–60 (IFHI…AGMA), 64–84 (LLSG…LFIL), 108–128 (LLLF…SLGM), 134–154 (FLAV…GLLA), and 165–185 (YSEA…LLPV).

The protein belongs to the MntP (TC 9.B.29) family.

It is found in the cell membrane. In terms of biological role, probably functions as a manganese efflux pump. In Bacillus velezensis (strain DSM 23117 / BGSC 10A6 / LMG 26770 / FZB42) (Bacillus amyloliquefaciens subsp. plantarum), this protein is Putative manganese efflux pump MntP.